Here is a 981-residue protein sequence, read N- to C-terminus: Amidohydrolase tasK (981 aa).

Residues 1–36 form a disordered region; the sequence is MDDQKGPLPPYTPTATAPPPASMRQRRPPGRRRALR. Residues 7–21 show a composition bias toward pro residues; the sequence is PLPPYTPTATAPPPA. The segment covering 24–36 has biased composition (basic residues); it reads RQRRPPGRRRALR. A helical membrane pass occupies residues 40 to 57; it reads TVRVLALACLAFVVLAQW. Residues 86–107 are disordered; sequence LRVRPQDPAGPGRSKNDRYLDG. Residues histidine 187 and histidine 189 each coordinate Fe(2+). Zn(2+)-binding residues include histidine 187 and histidine 189. The N-linked (GlcNAc...) asparagine glycan is linked to asparagine 407. The disordered stretch occupies residues 819 to 838; sequence KKQQKQQQQQQQQQQQQHGT. The segment covering 823-835 has biased composition (low complexity); sequence KQQQQQQQQQQQQ. Residue asparagine 891 is glycosylated (N-linked (GlcNAc...) asparagine).

Belongs to the metallo-dependent hydrolases superfamily. Requires Fe(2+) as cofactor. It depends on Mn(2+) as a cofactor. The cofactor is Zn(2+).

The protein localises to the membrane. Its function is as follows. Amidohydrolase; part of the gene cluster that mediates the biosynthesis of the tetramic acids Sch210971 and Sch210972, potential anti-HIV fungal natural product that contain a decalin core. The PKS module of tasS together with the enoylreductase tasC catalyze the formation of the polyketide unit which is then conjugated to 4-hydroxyl-4-methyl glutamate (HMG) by the condensation domain of the tasS NRPS module. One unique structural feature of Sch210971 and Sch210972 is the tetramic acid motif proposed to be derived from the non-proteinogenic amino acid HMG, by a Dieckmann-type condensation catalyzed by the reductase domain of tasS. The aldolase tasA catalyzes the aldol condensation of 2 molecules of pyruvic acid to yield the intermediate 4-hydroxyl-4-methyl-2-oxoglutarate (HMOG), which can then be stereoselectively transaminated, may be by tasG, to form HMG. The Diels-Alderase tas3 then uses the Dieckmann product of tasS as substrate and catalyzes the Diels-Alder cycloaddition to form the decalin ring of Sch210971 and Sch210972. The protein is Amidohydrolase tasK of Hapsidospora irregularis.